The following is a 226-amino-acid chain: MDTLTDRQREILELIRRSVAERGYPPTRAEICQSLGFRSPNAAESHLRALARKGAIEMRRGASRGIRLTDAFAGAAPEPSPATDDPNAGLPVVGRVAAGSPLLAEESIERYCQVDASLFSPPADYLLRVRGESMRDAGILDGDLLAVRRDTEARDGQIVVVRLHDEVTVKFLERCNGVLRLIPAHPDYPVIEVAADGQDAVLEGIGVGVLRSPLDPRGPEGNAASD.

The H-T-H motif DNA-binding region spans 28 to 48 (RAEICQSLGFRSPNAAESHLR). Residues Ser133 and Lys170 each act as for autocatalytic cleavage activity in the active site.

This sequence belongs to the peptidase S24 family. In terms of assembly, homodimer.

It catalyses the reaction Hydrolysis of Ala-|-Gly bond in repressor LexA.. In terms of biological role, represses a number of genes involved in the response to DNA damage (SOS response), including recA and lexA. In the presence of single-stranded DNA, RecA interacts with LexA causing an autocatalytic cleavage which disrupts the DNA-binding part of LexA, leading to derepression of the SOS regulon and eventually DNA repair. In Halorhodospira halophila (strain DSM 244 / SL1) (Ectothiorhodospira halophila (strain DSM 244 / SL1)), this protein is LexA repressor.